Here is a 237-residue protein sequence, read N- to C-terminus: NAD-dependent protein deacetylase (237 aa).

One can recognise a Deacetylase sirtuin-type domain in the interval 1-237 (MFTTSLRQAQ…LVETNRALQK (237 aa)). Ala18, Thr22, Phe29, Arg30, Gln95, Asp98, and His113 together coordinate NAD(+). Residue Phe29 participates in nicotinamide binding. Asp98 is a nicotinamide binding site. His113 acts as the Proton acceptor in catalysis. Zn(2+) is bound by residues Cys121, Cys124, Cys140, and Cys142. 4 residues coordinate NAD(+): Ser180, Ser181, Asn205, and Ile224.

This sequence belongs to the sirtuin family. Class U subfamily. Requires Zn(2+) as cofactor.

The protein resides in the cytoplasm. The enzyme catalyses N(6)-acetyl-L-lysyl-[protein] + NAD(+) + H2O = 2''-O-acetyl-ADP-D-ribose + nicotinamide + L-lysyl-[protein]. Its function is as follows. NAD-dependent protein deacetylase which modulates the activities of several enzymes which are inactive in their acetylated form. The sequence is that of NAD-dependent protein deacetylase from Shouchella clausii (strain KSM-K16) (Alkalihalobacillus clausii).